The primary structure comprises 178 residues: 2-C-methyl-D-erythritol 2,4-cyclodiphosphate synthase (178 aa).

3 residues coordinate a divalent metal cation: Asp24, His26, and His61. 24–26 (DSH) serves as a coordination point for 4-CDP-2-C-methyl-D-erythritol 2-phosphate. Residue 150 to 153 (TSGE) participates in 4-CDP-2-C-methyl-D-erythritol 2-phosphate binding.

Belongs to the IspF family. As to quaternary structure, homotrimer. The cofactor is a divalent metal cation.

It carries out the reaction 4-CDP-2-C-methyl-D-erythritol 2-phosphate = 2-C-methyl-D-erythritol 2,4-cyclic diphosphate + CMP. The protein operates within isoprenoid biosynthesis; isopentenyl diphosphate biosynthesis via DXP pathway; isopentenyl diphosphate from 1-deoxy-D-xylulose 5-phosphate: step 4/6. Functionally, involved in the biosynthesis of isopentenyl diphosphate (IPP) and dimethylallyl diphosphate (DMAPP), two major building blocks of isoprenoid compounds. Catalyzes the conversion of 4-diphosphocytidyl-2-C-methyl-D-erythritol 2-phosphate (CDP-ME2P) to 2-C-methyl-D-erythritol 2,4-cyclodiphosphate (ME-CPP) with a corresponding release of cytidine 5-monophosphate (CMP). The sequence is that of 2-C-methyl-D-erythritol 2,4-cyclodiphosphate synthase from Chlamydia trachomatis serovar L2b (strain UCH-1/proctitis).